A 248-amino-acid polypeptide reads, in one-letter code: Probable transcriptional regulatory protein Mrad2831_3553 (248 aa).

It belongs to the TACO1 family.

Its subcellular location is the cytoplasm. This chain is Probable transcriptional regulatory protein Mrad2831_3553, found in Methylobacterium radiotolerans (strain ATCC 27329 / DSM 1819 / JCM 2831 / NBRC 15690 / NCIMB 10815 / 0-1).